A 311-amino-acid polypeptide reads, in one-letter code: Cytosolic Fe-S cluster assembly factor Nubp1 homolog (311 aa).

[4Fe-4S] cluster-binding residues include Cys9, Cys23, Cys26, and Cys32. An ATP-binding site is contributed by Gly63–Ser70. Residues Cys240 and Cys243 each coordinate [4Fe-4S] cluster.

The protein belongs to the Mrp/NBP35 ATP-binding proteins family. NUBP1/NBP35 subfamily. Heterotetramer of 2 Nubp1 and 2 Nubp2 chains. [4Fe-4S] cluster serves as cofactor.

It is found in the cytoplasm. Functionally, component of the cytosolic iron-sulfur (Fe/S) protein assembly (CIA) machinery. Required for maturation of extramitochondrial Fe-S proteins. The Nubp1-Nubp2 heterotetramer forms a Fe-S scaffold complex, mediating the de novo assembly of an Fe-S cluster and its transfer to target apoproteins. This Drosophila erecta (Fruit fly) protein is Cytosolic Fe-S cluster assembly factor Nubp1 homolog.